Reading from the N-terminus, the 342-residue chain is Phosphoribosylformylglycinamidine cyclo-ligase (342 aa).

The protein belongs to the AIR synthase family.

The protein localises to the cytoplasm. The enzyme catalyses 2-formamido-N(1)-(5-O-phospho-beta-D-ribosyl)acetamidine + ATP = 5-amino-1-(5-phospho-beta-D-ribosyl)imidazole + ADP + phosphate + H(+). It functions in the pathway purine metabolism; IMP biosynthesis via de novo pathway; 5-amino-1-(5-phospho-D-ribosyl)imidazole from N(2)-formyl-N(1)-(5-phospho-D-ribosyl)glycinamide: step 2/2. This Latilactobacillus sakei subsp. sakei (strain 23K) (Lactobacillus sakei subsp. sakei) protein is Phosphoribosylformylglycinamidine cyclo-ligase.